The following is a 392-amino-acid chain: L-rhamnonate dehydratase (392 aa).

His-22 and Arg-48 together coordinate substrate. 3 residues coordinate Mg(2+): Asp-214, Glu-240, and Glu-268. His-318 acts as the Proton acceptor in catalysis. Position 338 (Glu-338) interacts with substrate.

Belongs to the mandelate racemase/muconate lactonizing enzyme family. RhamD subfamily. Homooctamer; tetramer of dimers. Requires Mg(2+) as cofactor.

It carries out the reaction L-rhamnonate = 2-dehydro-3-deoxy-L-rhamnonate + H2O. Catalyzes the dehydration of L-rhamnonate to 2-keto-3-deoxy-L-rhamnonate (KDR). This is L-rhamnonate dehydratase from Paraburkholderia xenovorans (strain LB400).